The primary structure comprises 793 residues: MKVTPLMEQYLRIKEQYKDSILLFRLGDFYEAFFEDAKIVSKVLNIVLTRRQDAPMAGIPYHALNTYLKKLVEAGYKVAICDQMEEPSKSKKLIRREVTRVVTPGSIVEDEFLSETNNYMAVVSEEKGRYCTVFCDVSTGEVLVHESSDEQETLDLLKNYSISQIVCSEHLKSSLRERFPGVYTESISEWYFSDLEEVEKAYNLKDIHHFELSPLALKTLAALIKYVKYTMITEDLNLKPPLLISQRDYMILDSATVENLSLIPGDRGKNLFDVLNNTETPMGARLLKKWILHPLVDRKQIEERLEAVERLVNDRVSLEEMRNFLSNVRDVERIVSRVEYNRSVPRDLVALRETLEIIPKLNEILSNFGVFNKLAFPEELVDLLRRAIEDDPLGSPGEGKVIKRGFSPELDEYRDLLEHAEERLKEFEEKERERTGIQKLRVGYNQVFGYYIEVTKANLDKIPDDYERKQTLVNSERFITPELKEFETKIMAAKERIEEMEKELFKSVCEEVKKHKEVLLKLSEDLAKMDVLSTLAYDAILYNYTKPVFSEDRLEIKGGRHPVVERFTQNFVENDIYMDNEKRFVVITGPNMSGKSTFIRQVGLISLMAQIGSFVPAQKAILPVFDRIFTRMGARDDLAGGRSTFLVEMNEMALILLKSTEKSLVLLDEVGRGTSTQDGVSIAWAISEELIKRGCKVLFATHFTELTELEKHFPQVQNKTILVKEEGKNVIFTHKVVDGVADRSYGIEVAKIAGIPDRVINRAYEILERNFKNHTKKNGKSNRFSQQIPLFPV.

G589 to S596 contributes to the ATP binding site.

It belongs to the DNA mismatch repair MutS family.

Functionally, this protein is involved in the repair of mismatches in DNA. It is possible that it carries out the mismatch recognition step. This protein has a weak ATPase activity. The protein is DNA mismatch repair protein MutS of Thermotoga sp. (strain RQ2).